The following is a 588-amino-acid chain: Polyphenol oxidase II, chloroplastic (588 aa).

Positions 1–10 (MASFTTSPCT) are enriched in polar residues. The tract at residues 1 to 32 (MASFTTSPCTSAAPKTPKSLSSSATISSPLPK) is disordered. Residues 1–50 (MASFTTSPCTSAAPKTPKSLSSSATISSPLPKPSQIHIATAKRTHHFKVS) constitute a chloroplast transit peptide. A compositionally biased stretch (low complexity) spans 16 to 29 (TPKSLSSSATISSP). Residues 51–88 (CNAPNGDSQPKLDRRDVLLGLGGLAGAASLINNPLAFA) constitute a thylakoid transit peptide. 2 cysteine pairs are disulfide-bonded: Cys99–Cys116 and Cys115–Cys179. His178, His199, His208, His330, His334, and His366 together coordinate Cu cation. The segment at residues 182–199 (CNGGYVQTDYPDKEIQVH) is a cross-link (2'-(S-cysteinyl)-histidine (Cys-His)).

Belongs to the tyrosinase family. As to quaternary structure, monomer. Cu(2+) is required as a cofactor.

The protein resides in the plastid. It localises to the chloroplast thylakoid lumen. It catalyses the reaction 2 catechol + O2 = 2 1,2-benzoquinone + 2 H2O. Catalyzes the oxidation of mono- and o-diphenols to o-diquinones. The sequence is that of Polyphenol oxidase II, chloroplastic (co-2) from Ipomoea batatas (Sweet potato).